The primary structure comprises 161 residues: Anaerobic nitrite reductase GLB1 (161 aa).

The Globin domain maps to 9 to 157 (VFTEEQEALV…LVAAIKSEMK (149 aa)). Positions 42–46 (EIAPS) match the Homodimerization motif. 5 residues coordinate heme b: Ser52, Lys66, His70, Arg100, and His105. Residues 112-123 (NEHFETRFALLE) carry the Homodimerization motif.

Belongs to the plant globin family. Homodimer. Heme b serves as cofactor. Root specific.

Its subcellular location is the cytoplasm. The protein localises to the nucleus. The catalysed reaction is Fe(III)-heme b-[protein] + nitric oxide + H2O = Fe(II)-heme b-[protein] + nitrite + 2 H(+). Its function is as follows. Phytoglobin that reduces nitrite to nitric oxide (NO) under anoxic conditions (e.g. during flooding or in waterlogged soil) and upon root nodulation. Required for general plant development and during nodulation, especially for the onset of symbiosis. Monitors nitric oxide (NO) levels during early phase of the nitrogen-fixing symbiosis and buffers oxygen in functioning nodules. May not function as an oxygen storage or transport protein. Has an unusually high affinity for O(2) through a hexacoordinate heme iron because of a very low dissociation constant. The protein is Anaerobic nitrite reductase GLB1 (GLB1) of Trema tomentosum (Peach-leaf poison-bush).